The following is a 450-amino-acid chain: Tubulin beta-1 chain (450 aa).

Positions 11, 69, 138, 142, 143, 144, 204, and 226 each coordinate GTP. Glu-69 is a Mg(2+) binding site. A disordered region spans residues 426–450 (QDATADEDEYGEEEGDEEEYGQHDI). Acidic residues predominate over residues 429–444 (TADEDEYGEEEGDEEE).

Belongs to the tubulin family. In terms of assembly, dimer of alpha and beta chains. A typical microtubule is a hollow water-filled tube with an outer diameter of 25 nm and an inner diameter of 15 nM. Alpha-beta heterodimers associate head-to-tail to form protofilaments running lengthwise along the microtubule wall with the beta-tubulin subunit facing the microtubule plus end conferring a structural polarity. Microtubules usually have 13 protofilaments but different protofilament numbers can be found in some organisms and specialized cells. Mg(2+) is required as a cofactor.

The protein resides in the cytoplasm. It is found in the cytoskeleton. In terms of biological role, tubulin is the major constituent of microtubules, a cylinder consisting of laterally associated linear protofilaments composed of alpha- and beta-tubulin heterodimers. Microtubules grow by the addition of GTP-tubulin dimers to the microtubule end, where a stabilizing cap forms. Below the cap, tubulin dimers are in GDP-bound state, owing to GTPase activity of alpha-tubulin. The polypeptide is Tubulin beta-1 chain (TUBB1) (Pisum sativum (Garden pea)).